The chain runs to 1110 residues: cGMP-specific 3',5'-cyclic phosphodiesterase (1110 aa).

Low complexity-rich tracts occupy residues 1–25 and 35–55; these read MTDVSAAAGGATAPAETAATSSSAS and TSTAMAAPTATPTTAATASGA. 3 disordered regions span residues 1–55, 67–128, and 184–203; these read MTDV…ASGA, ISNQ…QQDV, and ASPTVQQKSPRSLSNSSASS. Pro residues predominate over residues 88–103; sequence APYPPVPAAKPKPTPT. Low complexity predominate over residues 192–203; it reads SPRSLSNSSASS. GAF domains lie at 233–385 and 417–601; these read DIDV…GIGI and NLEC…GLGI. Residues 631–954 enclose the PDEase domain; it reads SQDQTEKLTQ…RNWQDLAEKV (324 aa). His707 acts as the Proton donor in catalysis. A divalent metal cation is bound by residues His711, His747, Asp748, and Asp858. 2 disordered regions span residues 997 to 1028 and 1040 to 1110; these read AQHGAGAGGDDSHTPEHQRSGSRLSMKKTGAL and LYNS…CSLL. Composition is skewed to basic and acidic residues over residues 1006–1015 and 1056–1068; these read DDSHTPEHQR and LESHVSEDMDDKS. The span at 1082-1097 shows a compositional bias: low complexity; sequence GRMSASSSTSSAGTVV. Residues 1100–1110 show a composition bias toward basic residues; that stretch reads SKKRSKLCSLL. Cys1107 carries the post-translational modification Cysteine methyl ester. The S-farnesyl cysteine moiety is linked to residue Cys1107. Positions 1108 to 1110 are cleaved as a propeptide — removed in mature form; that stretch reads SLL.

Belongs to the cyclic nucleotide phosphodiesterase family. Interacts with PrBP. Requires a divalent metal cation as cofactor.

The protein resides in the cell membrane. The enzyme catalyses 3',5'-cyclic GMP + H2O = GMP + H(+). Has a role regulating cGMP transport in Malpighian tubule principal cells. In Drosophila pseudoobscura pseudoobscura (Fruit fly), this protein is cGMP-specific 3',5'-cyclic phosphodiesterase.